Here is a 902-residue protein sequence, read N- to C-terminus: HTH-type transcriptional regulator MalT (902 aa).

Residue 39–46 (SPAGYGKT) participates in ATP binding. Residues 830–895 (ELIRTSPLTQ…DAVQHAQQLL (66 aa)) enclose the HTH luxR-type domain. The H-T-H motif DNA-binding region spans 854–873 (NEQIAGELAVAATTIKTHIR).

It belongs to the MalT family. Monomer in solution. Oligomerizes to an active state in the presence of the positive effectors ATP and maltotriose.

Its activity is regulated as follows. Activated by ATP and maltotriose, which are both required for DNA binding. Positively regulates the transcription of the maltose regulon whose gene products are responsible for uptake and catabolism of malto-oligosaccharides. Specifically binds to the promoter region of its target genes, recognizing a short DNA motif called the MalT box. This Salmonella dublin (strain CT_02021853) protein is HTH-type transcriptional regulator MalT.